A 358-amino-acid chain; its full sequence is Phospho-N-acetylmuramoyl-pentapeptide-transferase (358 aa).

Transmembrane regions (helical) follow at residues 28-48 (WALA…IAWL), 72-92 (TMGG…WADL), 96-116 (YIWL…LDDY), 133-153 (FLWQ…LPAY), 164-184 (GLTP…MVGS), 196-216 (GLAI…IYVA), 233-253 (VGEV…FLWF), 260-280 (VFMG…LAVL), 285-305 (LLLL…ILQV), and 335-355 (KIII…LSVL).

It belongs to the glycosyltransferase 4 family. MraY subfamily. Mg(2+) serves as cofactor.

The protein resides in the cell inner membrane. It catalyses the reaction UDP-N-acetyl-alpha-D-muramoyl-L-alanyl-gamma-D-glutamyl-meso-2,6-diaminopimeloyl-D-alanyl-D-alanine + di-trans,octa-cis-undecaprenyl phosphate = di-trans,octa-cis-undecaprenyl diphospho-N-acetyl-alpha-D-muramoyl-L-alanyl-D-glutamyl-meso-2,6-diaminopimeloyl-D-alanyl-D-alanine + UMP. It functions in the pathway cell wall biogenesis; peptidoglycan biosynthesis. Catalyzes the initial step of the lipid cycle reactions in the biosynthesis of the cell wall peptidoglycan: transfers peptidoglycan precursor phospho-MurNAc-pentapeptide from UDP-MurNAc-pentapeptide onto the lipid carrier undecaprenyl phosphate, yielding undecaprenyl-pyrophosphoryl-MurNAc-pentapeptide, known as lipid I. This is Phospho-N-acetylmuramoyl-pentapeptide-transferase from Nitratidesulfovibrio vulgaris (strain ATCC 29579 / DSM 644 / CCUG 34227 / NCIMB 8303 / VKM B-1760 / Hildenborough) (Desulfovibrio vulgaris).